The sequence spans 335 residues: Hsp90 co-chaperone Cdc37-like 1 (335 aa).

The span at 1 to 11 (MEQPWPPPGPW) shows a compositional bias: pro residues. The tract at residues 1 to 42 (MEQPWPPPGPWSFPRTGGETEEESDLDVSPSSSHYSPVPDGG) is disordered. Positions 2–170 (EQPWPPPGPW…YEQKIRHFGM (169 aa)) are self-association. Over residues 27-40 (DVSPSSSHYSPVPD) the composition is skewed to low complexity. Residues Ser-32 and Ser-88 each carry the phosphoserine modification. Positions 84-120 (HNSESLDQEHAKAQTAVSELRQREEEWRQKEEALVQR) form a coiled coil. The interval 147–276 (KTEDEDKSQS…ARVRLYAQSQ (130 aa)) is self-association and interaction with Hsp90. An interaction with Hsp70 region spans residues 266–335 (KARVRLYAQS…EDDDRMMDTV (70 aa)). The segment at 277–335 (SFAPVTVENHAPHSGVGCIGSAEPLPQNPDSLQCCPPAPLCSVDSVVHKEDDDRMMDTV) is required for interaction with STIP1.

Belongs to the CDC37 family. As to quaternary structure, self-associates. Forms complexes with Hsp70 and Hsp90. Interacts with CDC37, FKBP4, PPID and STIP1.

Its subcellular location is the cytoplasm. Functionally, co-chaperone that binds to numerous proteins and promotes their interaction with Hsp70 and Hsp90. The protein is Hsp90 co-chaperone Cdc37-like 1 (Cdc37l1) of Rattus norvegicus (Rat).